The sequence spans 408 residues: Succinylornithine transaminase (408 aa).

The residue at position 252 (K252) is an N6-(pyridoxal phosphate)lysine.

This sequence belongs to the class-III pyridoxal-phosphate-dependent aminotransferase family. AstC subfamily. Requires pyridoxal 5'-phosphate as cofactor.

It catalyses the reaction N(2)-succinyl-L-ornithine + 2-oxoglutarate = N-succinyl-L-glutamate 5-semialdehyde + L-glutamate. Its pathway is amino-acid degradation; L-arginine degradation via AST pathway; L-glutamate and succinate from L-arginine: step 3/5. Functionally, catalyzes the transamination of N(2)-succinylornithine and alpha-ketoglutarate into N(2)-succinylglutamate semialdehyde and glutamate. Can also act as an acetylornithine aminotransferase. This is Succinylornithine transaminase from Salmonella heidelberg (strain SL476).